The sequence spans 1503 residues: DNA-directed RNA polymerase subunit beta' (1503 aa).

4 residues coordinate Zn(2+): cysteine 71, cysteine 73, cysteine 86, and cysteine 89. Residues aspartate 470, aspartate 472, and aspartate 474 each coordinate Mg(2+). Zn(2+)-binding residues include cysteine 800, cysteine 874, cysteine 881, and cysteine 884.

It belongs to the RNA polymerase beta' chain family. The RNAP catalytic core consists of 2 alpha, 1 beta, 1 beta' and 1 omega subunit. When a sigma factor is associated with the core the holoenzyme is formed, which can initiate transcription. Mg(2+) is required as a cofactor. The cofactor is Zn(2+).

It carries out the reaction RNA(n) + a ribonucleoside 5'-triphosphate = RNA(n+1) + diphosphate. In terms of biological role, DNA-dependent RNA polymerase catalyzes the transcription of DNA into RNA using the four ribonucleoside triphosphates as substrates. In Sulfurimonas denitrificans (strain ATCC 33889 / DSM 1251) (Thiomicrospira denitrificans (strain ATCC 33889 / DSM 1251)), this protein is DNA-directed RNA polymerase subunit beta'.